A 109-amino-acid polypeptide reads, in one-letter code: Cysteine-rich venom protein 7 (109 aa).

The signal sequence occupies residues 1–21 (MSKVFVIILVALMVAISIASA). 5 disulfides stabilise this stretch: Cys-30–Cys-47, Cys-37–Cys-52, Cys-46–Cys-58, Cys-70–Cys-90, and Cys-78–Cys-98.

In terms of tissue distribution, expressed by the venom gland.

It localises to the secreted. This is Cysteine-rich venom protein 7 from Pimpla hypochondriaca (Parasitoid wasp).